The following is a 120-amino-acid chain: uncharacterized protein (120 aa).

A helical membrane pass occupies residues 8 to 28 (LIVKWFVGLMLIMMMVAVSLF).

The protein localises to the membrane. This is an uncharacterized protein from Bacillus anthracis.